Here is a 342-residue protein sequence, read N- to C-terminus: Nicotinate-nucleotide--dimethylbenzimidazole phosphoribosyltransferase (342 aa).

Catalysis depends on Glu311, which acts as the Proton acceptor.

It belongs to the CobT family.

The catalysed reaction is 5,6-dimethylbenzimidazole + nicotinate beta-D-ribonucleotide = alpha-ribazole 5'-phosphate + nicotinate + H(+). It functions in the pathway nucleoside biosynthesis; alpha-ribazole biosynthesis; alpha-ribazole from 5,6-dimethylbenzimidazole: step 1/2. Catalyzes the synthesis of alpha-ribazole-5'-phosphate from nicotinate mononucleotide (NAMN) and 5,6-dimethylbenzimidazole (DMB). This Vibrio vulnificus (strain CMCP6) protein is Nicotinate-nucleotide--dimethylbenzimidazole phosphoribosyltransferase.